A 31-amino-acid polypeptide reads, in one-letter code: MSDIN-like toxin proprotein 8 (31 aa).

Positions Met-1 to Pro-10 are excised as a propeptide. The cyclopeptide (Cys-Pro) cross-link spans Cys-11–Pro-18. Residues Ser-19 to Gly-31 constitute a propeptide that is removed on maturation.

Belongs to the MSDIN fungal toxin family. In terms of processing, processed by the macrocyclase-peptidase enzyme POPB to yield a toxic cyclic octapeptide. POPB first removes 10 residues from the N-terminus. Conformational trapping of the remaining peptide forces the enzyme to release this intermediate rather than proceed to macrocyclization. The enzyme rebinds the remaining peptide in a different conformation and catalyzes macrocyclization of the N-terminal 8 residues.

Probable toxin that belongs to the MSDIN-like toxin family responsible for a large number of food poisoning cases and deaths. This chain is MSDIN-like toxin proprotein 8, found in Amanita bisporigera (Destroying angel).